The following is a 326-amino-acid chain: Type II methyltransferase M.EcoRI (326 aa).

It belongs to the N(4)/N(6)-methyltransferase family. As to quaternary structure, monomer.

The enzyme catalyses a 2'-deoxyadenosine in DNA + S-adenosyl-L-methionine = an N(6)-methyl-2'-deoxyadenosine in DNA + S-adenosyl-L-homocysteine + H(+). Its function is as follows. A methylase that recognizes the double-stranded sequence 5'-GAATTC-3', methylates A-3 on both strands, and protects the DNA from cleavage by the EcoRI endonuclease. The protein is Type II methyltransferase M.EcoRI (ecoRIM) of Escherichia coli.